Here is a 79-residue protein sequence, read N- to C-terminus: Exodeoxyribonuclease 7 small subunit (79 aa).

This sequence belongs to the XseB family. Heterooligomer composed of large and small subunits.

It is found in the cytoplasm. It carries out the reaction Exonucleolytic cleavage in either 5'- to 3'- or 3'- to 5'-direction to yield nucleoside 5'-phosphates.. Bidirectionally degrades single-stranded DNA into large acid-insoluble oligonucleotides, which are then degraded further into small acid-soluble oligonucleotides. In Shouchella clausii (strain KSM-K16) (Alkalihalobacillus clausii), this protein is Exodeoxyribonuclease 7 small subunit.